The following is a 377-amino-acid chain: Serine protease grass (377 aa).

A signal peptide spans 1–26 (MMIASSLAVLYGIAIVSSMGVQSARA). The Clip domain occupies 31–89 (DCTTPDGDQGQCMPFSSCRTIEERLTEAQKAGQKVPADYASYLQKALCGEFNGVRHFCC). 6 disulfide bridges follow: cysteine 32–cysteine 88, cysteine 42–cysteine 78, cysteine 48–cysteine 89, cysteine 111–cysteine 243, cysteine 148–cysteine 164, and cysteine 188–cysteine 197. The interval 91–118 (SANIQHNSKVMSLFKDENFDCGNFLSQR) is linker. Positions 119 to 373 (VSNGYEVKLS…YVQWITDTMA (255 aa)) constitute a Peptidase S1 domain. The Charge relay system role is filled by histidine 163. Ca(2+) is bound by residues glutamate 179, arginine 181, threonine 184, and aspartate 187. Aspartate 223 functions as the Charge relay system in the catalytic mechanism. Residues asparagine 230 and asparagine 270 are each glycosylated (N-linked (GlcNAc...) asparagine). 2 disulfide bridges follow: cysteine 290–cysteine 304 and cysteine 314–cysteine 349. Serine 318 functions as the Charge relay system in the catalytic mechanism.

Belongs to the peptidase S1 family. CLIP subfamily. Post-translationally, proteolytically cleaved by a tryspin-like protease which is likely to activate grass.

The protein localises to the secreted. Endopeptidase. Plays a key role in innate immunity by activating the Toll pathway in response to fungal and Gram-positive bacterial infections, presumably downstream of pattern-recognition receptors (PRR), such as PGRP-SA, GNBP1 and GNBP3, and upstream of spz processing enzyme SPE. The sequence is that of Serine protease grass from Drosophila melanogaster (Fruit fly).